The following is a 178-amino-acid chain: Large ribosomal subunit protein uL6 (178 aa).

This sequence belongs to the universal ribosomal protein uL6 family. Part of the 50S ribosomal subunit.

Its function is as follows. This protein binds to the 23S rRNA, and is important in its secondary structure. It is located near the subunit interface in the base of the L7/L12 stalk, and near the tRNA binding site of the peptidyltransferase center. This chain is Large ribosomal subunit protein uL6, found in Micrococcus luteus (Micrococcus lysodeikticus).